We begin with the raw amino-acid sequence, 445 residues long: E3 ubiquitin-protein ligase pellino homolog 3 (445 aa).

Residues 1–24 (MVLEGNPDVGSPRTSDLQHPGSQG) form a disordered region. At Ser-11 the chain carries Phosphoserine. Positions 12-24 (PRTSDLQHPGSQG) are enriched in polar residues.

It belongs to the pellino family. In terms of assembly, interacts with TRAF6, MAP3K14 and MAP3K7. Post-translationally, phosphorylated by IRAK1 enhancing its E3 ligase activity.

The catalysed reaction is S-ubiquitinyl-[E2 ubiquitin-conjugating enzyme]-L-cysteine + [acceptor protein]-L-lysine = [E2 ubiquitin-conjugating enzyme]-L-cysteine + N(6)-ubiquitinyl-[acceptor protein]-L-lysine.. The protein operates within protein modification; protein ubiquitination. Functionally, E3 ubiquitin ligase catalyzing the covalent attachment of ubiquitin moieties onto substrate proteins. Involved in the TLR and IL-1 signaling pathways via interaction with the complex containing IRAK kinases and TRAF6. Mediates 'Lys-63'-linked polyubiquitination of IRAK1. Can activate AP1/JUN and ELK1. Acts as a regulator of innate immunity by mediating 'Lys-63'-linked polyubiquitination of RIPK2 downstream of NOD1 and NOD2, thereby transforming RIPK2 into a scaffolding protein for downstream effectors, ultimately leading to activation of the NF-kappa-B and MAP kinases signaling. Catalyzes 'Lys-63'-linked polyubiquitination of RIPK2 in parallel of XIAP. This is E3 ubiquitin-protein ligase pellino homolog 3 from Mus musculus (Mouse).